The chain runs to 340 residues: Cytosolic Fe-S cluster assembly factor NBP35 (340 aa).

A disordered region spans residues 1–41 (MPSLVDPVANKTDEGNNRTDLKAPEPEHCPGTESEEAGKAD). Over residues 11-30 (KTDEGNNRTDLKAPEPEHCP) the composition is skewed to basic and acidic residues. [4Fe-4S] cluster contacts are provided by Cys29, Cys43, Cys46, and Cys52. 82 to 89 (GKGGVGKS) provides a ligand contact to ATP. Residues Cys255 and Cys258 each contribute to the [4Fe-4S] cluster site.

Belongs to the Mrp/NBP35 ATP-binding proteins family. NUBP1/NBP35 subfamily. Heterotetramer of 2 NBP35 and 2 CFD1 chains. Requires [4Fe-4S] cluster as cofactor.

It is found in the cytoplasm. The protein localises to the nucleus. Functionally, component of the cytosolic iron-sulfur (Fe/S) protein assembly (CIA) machinery. Required for maturation of extramitochondrial Fe-S proteins. The NBP35-CFD1 heterotetramer forms a Fe-S scaffold complex, mediating the de novo assembly of an Fe-S cluster and its transfer to target apoproteins. Required for biogenesis and export of both ribosomal subunits, which may reflect a role in assembly of the Fe/S clusters in RLI1, a protein which performs rRNA processing and ribosome export. The polypeptide is Cytosolic Fe-S cluster assembly factor NBP35 (Yarrowia lipolytica (strain CLIB 122 / E 150) (Yeast)).